The primary structure comprises 419 residues: Alpha-galactosidase A (419 aa).

The N-terminal stretch at 1 to 31 (MKLLSRDTRLVCELALCPLALVFWSILGVRA) is a signal peptide. Cystine bridges form between Cys-52–Cys-94 and Cys-56–Cys-63. A glycan (N-linked (GlcNAc...) asparagine) is linked at Asn-139. An intrachain disulfide couples Cys-142 to Cys-172. Asp-170 (nucleophile) is an active-site residue. Phosphotyrosine is present on Tyr-186. Residue Asn-192 is glycosylated (N-linked (GlcNAc...) asparagine). Cys-202 and Cys-223 form a disulfide bridge. 203–207 (EWPLY) lines the substrate pocket. N-linked (GlcNAc...) asparagine glycosylation is present at Asn-215. The active-site Proton donor is Asp-231. A disulfide bridge links Cys-378 with Cys-382.

The protein belongs to the glycosyl hydrolase 27 family. Homodimer.

The protein resides in the lysosome. It catalyses the reaction Hydrolysis of terminal, non-reducing alpha-D-galactose residues in alpha-D-galactosides, including galactose oligosaccharides, galactomannans and galactolipids.. It carries out the reaction a globoside Gb3Cer (d18:1(4E)) + H2O = a beta-D-Gal-(1-&gt;4)-beta-D-Glc-(1&lt;-&gt;1)-Cer(d18:1(4E)) + D-galactose. The enzyme catalyses a globoside Gb3Cer + H2O = a beta-D-galactosyl-(1-&gt;4)-beta-D-glucosyl-(1&lt;-&gt;1)-ceramide + D-galactose. Its activity is regulated as follows. Galactosylgalactosylglucosylceramidase activity is stimulated by saposin B and ammonium chloride. Its function is as follows. Catalyzes the hydrolysis of glycosphingolipids and participates in their degradation in the lysosome. The sequence is that of Alpha-galactosidase A from Mus musculus (Mouse).